Reading from the N-terminus, the 243-residue chain is tRNA (guanine-N(1)-)-methyltransferase (243 aa).

S-adenosyl-L-methionine contacts are provided by residues Gly-111 and 130–135 (IGDYVL).

The protein belongs to the RNA methyltransferase TrmD family. As to quaternary structure, homodimer.

Its subcellular location is the cytoplasm. The enzyme catalyses guanosine(37) in tRNA + S-adenosyl-L-methionine = N(1)-methylguanosine(37) in tRNA + S-adenosyl-L-homocysteine + H(+). Its function is as follows. Specifically methylates guanosine-37 in various tRNAs. The sequence is that of tRNA (guanine-N(1)-)-methyltransferase from Acholeplasma laidlawii (strain PG-8A).